Reading from the N-terminus, the 141-residue chain is Hemoglobin subunit alpha (141 aa).

The Globin domain maps to 1-141; that stretch reads VLSSADKNNV…VSTVLTSKYR (141 aa). Ser-3 is subject to Phosphoserine. Residues Lys-7 and Lys-11 each carry the N6-succinyllysine modification. Lys-16 bears the N6-acetyllysine; alternate mark. Lys-16 is subject to N6-succinyllysine; alternate. A Phosphotyrosine modification is found at Tyr-24. Ser-35 carries the post-translational modification Phosphoserine. Lys-40 is subject to N6-succinyllysine. The residue at position 49 (Ser-49) is a Phosphoserine. His-58 is an O2 binding site. His-87 contributes to the heme b binding site. At Ser-102 the chain carries Phosphoserine. A Phosphothreonine modification is found at Thr-108. Residue Ser-124 is modified to Phosphoserine. Phosphothreonine is present on residues Thr-134 and Thr-137. Ser-138 carries the phosphoserine modification.

Belongs to the globin family. Heterotetramer of two alpha chains and two beta chains. Red blood cells.

Its function is as follows. Involved in oxygen transport from the lung to the various peripheral tissues. In terms of biological role, hemopressin acts as an antagonist peptide of the cannabinoid receptor CNR1. Hemopressin-binding efficiently blocks cannabinoid receptor CNR1 and subsequent signaling. The chain is Hemoglobin subunit alpha (HBA) from Panthera tigris sumatrae (Sumatran tiger).